We begin with the raw amino-acid sequence, 473 residues long: Putative protein TIC 214 C-terminal part (473 aa).

The protein belongs to the TIC214 family. As to quaternary structure, part of the Tic complex.

Its subcellular location is the plastid. It is found in the chloroplast. Its function is as follows. Involved in protein precursor import into chloroplasts. May be part of an intermediate translocation complex acting as a protein-conducting channel at the inner envelope. This Anthoceros angustus (Hornwort) protein is Putative protein TIC 214 C-terminal part.